The following is a 175-amino-acid chain: Viral interleukin-10 homolog (175 aa).

An N-terminal signal peptide occupies residues 1–19 (MLSVMVSSSLVLIVFFLGA). 2 disulfide bridges follow: Cys37/Cys127 and Cys81/Cys132. An N-linked (GlcNAc...) asparagine; by host glycan is attached at Asn151.

It belongs to the IL-10 family. Homodimer; disulfide-linked.

The protein resides in the secreted. Functionally, functional viral IL-10 homolog. Can bind to the human IL-10 receptor and compete with human IL-10 for binding sites. Requires both subunits of the human IL-10 receptor complex to induce signal transduction events and biological activities. IL-10 signaling pathway has several immunosuppressive activities that are exploited by the virus. Inhibits TLR-induced type I interferon production in host plasmacytoid dendritic cells. This is Viral interleukin-10 homolog (UL111A) from Human cytomegalovirus (strain AD169) (HHV-5).